An 88-amino-acid polypeptide reads, in one-letter code: Small ribosomal subunit protein uS19 (88 aa).

This sequence belongs to the universal ribosomal protein uS19 family.

Protein S19 forms a complex with S13 that binds strongly to the 16S ribosomal RNA. The sequence is that of Small ribosomal subunit protein uS19 from Chlamydia felis (strain Fe/C-56) (Chlamydophila felis).